The primary structure comprises 206 residues: MKLAVFDFDSTLMDGETIDILAHHYGVGEEVDRITKGAMEGGLDFYESLKRRVALLRGMELSLVEEICANLTLMEGAKELIQELKRRDYKVVVFSGGFKNATSKARETLGLDADFSNILHHKEGKLTGEVGGEMMFGSSKGEMMQTLQRLLGISPELTMAVGDGANDASMFPFAKQRVAFCAKPILREKANIIIEKKDLREILAHL.

Asp-7 (nucleophile) is an active-site residue. The Mg(2+) site is built by Asp-7 and Asp-9. Asp-9 functions as the Proton donor in the catalytic mechanism. Substrate is bound by residues Glu-16, Arg-52, 95–96 (SG), and Lys-140. Asp-163 is a binding site for Mg(2+). A substrate-binding site is contributed by Asn-166.

This sequence belongs to the HAD-like hydrolase superfamily. SerB family. Requires Mg(2+) as cofactor.

It carries out the reaction O-phospho-L-serine + H2O = L-serine + phosphate. The catalysed reaction is O-phospho-D-serine + H2O = D-serine + phosphate. The protein operates within amino-acid biosynthesis; L-serine biosynthesis; L-serine from 3-phospho-D-glycerate: step 3/3. This is Phosphoserine phosphatase from Wolinella succinogenes (strain ATCC 29543 / DSM 1740 / CCUG 13145 / JCM 31913 / LMG 7466 / NCTC 11488 / FDC 602W) (Vibrio succinogenes).